The sequence spans 263 residues: Izumo sperm-egg fusion protein 3 (263 aa).

A signal peptide spans 1–22; the sequence is MGDLWVLLFSSLSLAAFHGVRG. Residues 23-176 lie on the Extracellular side of the membrane; it reads CLECDPKFTE…EDPKTAENRE (154 aa). N-linked (GlcNAc...) asparagine glycans are attached at residues N98 and N128. The chain crosses the membrane as a helical span at residues 177–197; the sequence is ISLYLIFIAEAVILASAVLLF. Over 198-263 the chain is Cytoplasmic; that stretch reads HVCISHRRKM…CAESEMQTGT (66 aa). A disordered region spans residues 241-263; the sequence is GRSNSNSLTGEPTCAESEMQTGT.

It belongs to the Izumo family. As to quaternary structure, monomer and homodimer. Sperm-specific (at protein level).

The protein localises to the cell membrane. Its subcellular location is the cytoplasmic vesicle. It is found in the secretory vesicle. It localises to the acrosome inner membrane. Its function is as follows. Plays an important role in the biogenesis of the acrosome during sperm development. The chain is Izumo sperm-egg fusion protein 3 (Izumo3) from Mus musculus (Mouse).